A 182-amino-acid chain; its full sequence is ATP-dependent protease subunit HslV (182 aa).

The active site involves threonine 12. 3 residues coordinate Na(+): alanine 167, cysteine 170, and threonine 173.

Belongs to the peptidase T1B family. HslV subfamily. As to quaternary structure, a double ring-shaped homohexamer of HslV is capped on each side by a ring-shaped HslU homohexamer. The assembly of the HslU/HslV complex is dependent on binding of ATP.

Its subcellular location is the cytoplasm. It carries out the reaction ATP-dependent cleavage of peptide bonds with broad specificity.. With respect to regulation, allosterically activated by HslU binding. Protease subunit of a proteasome-like degradation complex believed to be a general protein degrading machinery. The sequence is that of ATP-dependent protease subunit HslV from Chlorobium phaeobacteroides (strain BS1).